The following is a 285-amino-acid chain: Inositol oxygenase (285 aa).

A substrate-binding site is contributed by arginine 29. Serine 33 carries the phosphoserine modification. 85–87 provides a ligand contact to substrate; sequence DES. Residues histidine 98, histidine 123, and aspartate 124 each coordinate Fe cation. Residues lysine 127 and 141–142 contribute to the substrate site; that span reads GD. 3 residues coordinate Fe cation: histidine 194, histidine 220, and aspartate 253. 220 to 221 contributes to the substrate binding site; that stretch reads HS.

The protein belongs to the myo-inositol oxygenase family. Fe cation is required as a cofactor.

Its subcellular location is the cytoplasm. The enzyme catalyses myo-inositol + O2 = D-glucuronate + H2O + H(+). It functions in the pathway polyol metabolism; myo-inositol degradation into D-glucuronate; D-glucuronate from myo-inositol: step 1/1. The protein is Inositol oxygenase (MIOX) of Pongo abelii (Sumatran orangutan).